The primary structure comprises 438 residues: Trigger factor (438 aa).

The PPIase FKBP-type domain maps to 162–247 (GDIVTIDFEG…VKDIKVKELP (86 aa)).

It belongs to the FKBP-type PPIase family. Tig subfamily.

Its subcellular location is the cytoplasm. The enzyme catalyses [protein]-peptidylproline (omega=180) = [protein]-peptidylproline (omega=0). Involved in protein export. Acts as a chaperone by maintaining the newly synthesized protein in an open conformation. Functions as a peptidyl-prolyl cis-trans isomerase. This Caldicellulosiruptor bescii (strain ATCC BAA-1888 / DSM 6725 / KCTC 15123 / Z-1320) (Anaerocellum thermophilum) protein is Trigger factor.